The following is a 191-amino-acid chain: Protein HP-20 homolog (191 aa).

The first 16 residues, 1-16 (MADLRILVSIILMTNA), serve as a signal peptide directing secretion. Positions 22–58 (GCTGPPGPPGHPGPPGIRGPPGIRGIPGLPGPPGTPG) constitute a Collagen-like domain. Residues 22-61 (GCTGPPGPPGHPGPPGIRGPPGIRGIPGLPGPPGTPGPSV) are disordered. Positions 26–39 (PPGPPGHPGPPGIR) are enriched in pro residues. The region spanning 64 to 191 (PCHRQSAFTV…VTIYFSGFLT (128 aa)) is the C1q domain.

Its subcellular location is the secreted. In Bos taurus (Bovine), this protein is Protein HP-20 homolog.